A 356-amino-acid chain; its full sequence is MAREWPMTHPSNHPMDHHHQTLQAHLASQGADADCAAVIEALADAARELARQIAIAPLSGIDEGAATVNTDGDIQKALDIVADNLMREALRRAPVAGILSEEGDRPETVNEAAPLCVAIDPLDGSSNLQNNISVGTIFSIRPRGRDVLSSFFEPGTAQRAAGFFVYGPQTCLVLAIDRRVDLYVLHPTLHEFILAKSGIRIPQDTPEFAINASNRRHWSGAVRNYVDECLSGAAGPRGRDFNMRWIASLVAEAYRILMRGGVFLYPADSRPGYREGRLRLVYEAHPMALIMEWAGGSASSGRARILELSARSPHQRAPLIMGDVRLVRDVDMLHEGVEPLFETSDAPLFARRGLFR.

Residues 1 to 26 (MAREWPMTHPSNHPMDHHHQTLQAHL) are disordered. Residues Glu-101, Asp-120, Leu-122, and Asp-123 each contribute to the Mg(2+) site. Residues 123–126 (DGSS) and Asn-211 contribute to the substrate site. Residue Glu-283 coordinates Mg(2+).

The protein belongs to the FBPase class 1 family. In terms of assembly, homotetramer. The cofactor is Mg(2+).

Its subcellular location is the cytoplasm. The catalysed reaction is beta-D-fructose 1,6-bisphosphate + H2O = beta-D-fructose 6-phosphate + phosphate. Its pathway is carbohydrate biosynthesis; Calvin cycle. This is Fructose-1,6-bisphosphatase class 1 from Bradyrhizobium sp. (strain ORS 278).